The primary structure comprises 298 residues: S-adenosylmethionine-dependent nucleotide dehydratase (298 aa).

A Radical SAM core domain is found at 8–235; it reads ANKELVVNWH…QRFGEIIYAE (228 aa). Cys22, Cys26, and Cys29 together coordinate [4Fe-4S] cluster.

It belongs to the radical SAM superfamily. Viperin family. Requires [4Fe-4S] cluster as cofactor.

It catalyses the reaction CTP + AH2 + S-adenosyl-L-methionine = 3'-deoxy-3',4'-didehydro-CTP + 5'-deoxyadenosine + L-methionine + A + H2O + H(+). The enzyme catalyses UTP + AH2 + S-adenosyl-L-methionine = 3'-deoxy-3',4'-didehydro-UTP + 5'-deoxyadenosine + L-methionine + A + H2O + H(+). In terms of biological role, expression of pVip8 in E.coli (strain MG1655) confers resistance to phages lambda, P1, SECphi8 and T7. Prevents culture collapse upon infection with T7. Catalyzes the conversion of cytidine triphosphate (CTP) to 3'-deoxy-3',4'-didehydro-CTP (ddhCTP) and uridine triphosphate (UTP) to 3'-deoxy-3',4'-didehydro-UTP (ddhUTP), probably via a SAM-dependent radical mechanism. The modified nucleotides repress transcription from T7 RNA polymerase-directed genes (possibly by acting as chain terminators), strongly suggesting these nucleotides block viral polymerase transcription. The protein is S-adenosylmethionine-dependent nucleotide dehydratase of Psychrobacter lutiphocae (strain DSM 21542 / CCUG 56590 / IMMIB L-1110).